A 344-amino-acid polypeptide reads, in one-letter code: Phenylalanine--tRNA ligase alpha subunit (344 aa).

Glu-256 serves as a coordination point for Mg(2+).

Belongs to the class-II aminoacyl-tRNA synthetase family. Phe-tRNA synthetase alpha subunit type 1 subfamily. In terms of assembly, tetramer of two alpha and two beta subunits. It depends on Mg(2+) as a cofactor.

It localises to the cytoplasm. It carries out the reaction tRNA(Phe) + L-phenylalanine + ATP = L-phenylalanyl-tRNA(Phe) + AMP + diphosphate + H(+). This Onion yellows phytoplasma (strain OY-M) protein is Phenylalanine--tRNA ligase alpha subunit.